The sequence spans 279 residues: HTH-type transcriptional regulator HdfR (279 aa).

One can recognise an HTH lysR-type domain in the interval 1-58 (MDTELLKTFLEVSRTRHFGRAAESLYLTQSAVSFRIRQLENQLGVNLFTRHRNNIRLT). A DNA-binding region (H-T-H motif) is located at residues 18–37 (FGRAAESLYLTQSAVSFRIR).

It belongs to the LysR transcriptional regulatory family.

Negatively regulates the transcription of the flagellar master operon flhDC by binding to the upstream region of the operon. In Escherichia coli O17:K52:H18 (strain UMN026 / ExPEC), this protein is HTH-type transcriptional regulator HdfR.